A 416-amino-acid polypeptide reads, in one-letter code: Protein-glutamine gamma-glutamyltransferase (416 aa).

The tat-type signal signal peptide spans 1-29; the sequence is MHKRRRLLAFATVGAVICTAGFTPSVSQA. Residues 30-85 constitute a propeptide that is removed on maturation; that stretch reads ASSGDGEEKGSYAETHGLTADDVESINALNERALTLGQPGKPPKELPPSASAPSRA. The disordered stretch occupies residues 64–103; the sequence is TLGQPGKPPKELPPSASAPSRAPSDDRETPPAEPLDRMPE. The segment covering 76-85 has biased composition (low complexity); that stretch reads PPSASAPSRA. The segment covering 86-103 has biased composition (basic and acidic residues); the sequence is PSDDRETPPAEPLDRMPE. Cys149 is an active-site residue. Residues 290 to 331 form a disordered region; it reads GQDQRGSSDKRKYGDPEAFRPDQGTGLVDMSKDRSIPRSPAK. Basic and acidic residues predominate over residues 295–309; sequence GSSDKRKYGDPEAFR. Catalysis depends on residues Asp340 and His359.

The protein belongs to the bacterial TGase family. In terms of processing, predicted to be exported by the Tat system. The position of the signal peptide cleavage has not been experimentally proven.

It carries out the reaction L-glutaminyl-[protein] + L-lysyl-[protein] = [protein]-L-lysyl-N(6)-5-L-glutamyl-[protein] + NH4(+). Catalyzes the cross-linking of proteins and the conjugation of polyamines to proteins. The protein is Protein-glutamine gamma-glutamyltransferase of Streptomyces cinnamoneus (Streptoverticillium cinnamoneum).